The following is a 787-amino-acid chain: MASDAFMQTACPADAAEQLEAEHAEWAQLGCGAVPPPPAAASRPSRAAVAAYVGEVVDRMRAQSRADERVYVKCGQLVHLRVRARSVPLDDWLTSAELALVSEVAEPVRANRAFVEVSLRYFELTEYATLRALGLQSALKYEEMYLAKLEGGAIESMGQFFVRIAATAATWTMREPAFGRALVGEGATWCAVFNAYLTALYRQLVVPATPIMLFAGRARGSLASCYLLNPQVSSSTEAVEAITTEVARILLNRGGIGISFQSFDRAVSRDCKRGIMGALKLLDSMAMAINSDSERPTGICVYLEPWHCDVRAVLNMRGLLARDESTRCDNLFSCLWVPDLLFDRYLAHLEGREGVVWTLFDDRASHLSRLHGPAFTAEYERLEREGLGVETVPVQDLAFLIVRSIVMTGSPFVMFKDACNRHYHMDTAGDALTGSNLCTEIVQRASPDAHGVCNLASVNLPRCVREGEGGALAFDFAALSTAAATAAIFVNAMMLGGQYPTEKAARGVARHRSLGIGFQGLHTLLLELGMDMLSPAARRLNVEIAERLLLAVMATSATLCEYGCAPFEDFARSKFARGLMPFDGYEGVVLSLPRAWARLREKVARHGLYNAQFVALMPTVSSSQVTEGSEGFSPVFTNMFSKVTMSGELLRPNLPLMRALRKHFTREASRLGAVRALDREQWSVAAALGDLAPGHPLAKFKTAFEYDQERLIDLCADRAPFVDQSQSMSLFVTEPMDGKVPASQIMNLLVYAYKKGLKTGLYYCKIRKATNNGVFTGGDLVCSGCHL.

Substrate-binding positions include threonine 209, 224 to 225 (SC), glycine 255, 436 to 440 (NLCTE), and 618 to 622 (PTVSS). An intrachain disulfide couples cysteine 225 to cysteine 453. Asparagine 436 (proton acceptor) is an active-site residue. The active-site Cysteine radical intermediate is cysteine 438. Glutamate 440 serves as the catalytic Proton acceptor.

It belongs to the ribonucleoside diphosphate reductase large chain family. In terms of assembly, heterotetramer composed of a homodimer of the large subunit (R1) and a homodimer of the small subunit (R2). Larger multisubunit protein complex are also active, composed of (R1)n(R2)n.

It catalyses the reaction a 2'-deoxyribonucleoside 5'-diphosphate + [thioredoxin]-disulfide + H2O = a ribonucleoside 5'-diphosphate + [thioredoxin]-dithiol. Ribonucleoside-diphosphate reductase holoenzyme provides the precursors necessary for viral DNA synthesis. Allows virus growth in non-dividing cells, as well as reactivation from latency in infected hosts. Catalyzes the biosynthesis of deoxyribonucleotides from the corresponding ribonucleotides. This chain is Ribonucleoside-diphosphate reductase large subunit, found in Bos taurus (Bovine).